Consider the following 171-residue polypeptide: Anthrone oxygenase dmxR16 (171 aa).

A run of 3 helical transmembrane segments spans residues 21–41, 67–87, and 96–116; these read VIAAAFLSAITAGAMANISMI, GHIILPGICVGTCGLYAFSAL, and YALAGITTLSLVPFTWVFMTP. N118 and N129 each carry an N-linked (GlcNAc...) asparagine glycan. A helical transmembrane segment spans residues 145–165; the sequence is WLHATRSMFPLIGAILGFTGI.

It belongs to the anthrone oxygenase family.

It localises to the membrane. The enzyme catalyses emodin anthrone + O2 = emodin + H2O + H(+). The protein operates within secondary metabolite biosynthesis. Functionally, anthrone oxygenase; part of the gene cluster that mediates the biosynthesis of the dimeric xanthones cryptosporioptides. The pathway begins with the synthesis of atrochrysone thioester by the polyketide synthase dmx-nrPKS. The atrochrysone carboxyl ACP thioesterase dmxR1 then breaks the thioester bond and releases the atrochrysone carboxylic acid from dmx-nrPKS. Atrochrysone carboxylic acid is decarboxylated by the decarboxylase dmxR15, and oxidized by the anthrone oxygenase dmxR16 to yield emodin. Emodin is then reduced to emodin hydroquinone by the oxidoreductase dmxR7. A-ring reduction by the short chain dehydrogenase dmxR18, dehydration by the scytalone dehydratase-like protein dmxR17 and probable spontaneous re-oxidation, results in overall deoxygenation to chrysophanol. Baeyer-Villiger oxidation by the Baeyer-Villiger monooxygenase (BVMO) dmxR6 then yields monodictylactone in equilibrium with monodictyphenone. In the case of the cryptosporioptides biosynthesis, monodictylactone is reduced at C-12 to an alcohol (by the short chain dehydrogenases dmxR12 or dmxR8) and hydroxylated at C-5 by dmxR9, yielding the electron-rich aromatic which could eliminate H(2)O to form the ortho-quinonemethide, followed by tautomerisation to paraquinone and complete the formal reduction to produce the 10-methylgroup. Conjugate addition of C-4a-OH to the resulting paraquinone by the monooxygenase dmxR10 then gives cyclohexadienone, which is then reduced at C-5 by the short chain dehydrogenase dmxR3 to give the dihydroxanthone. The 6,7-epoxide in the cryptosporioptides could be introduced by the cytochrome P450 monooxygenase dmxL3. The highly reducing PKS dmxL2 manufactures butyrate, which is further carboxylated by dmxL1 to form ethylmalonate. It is not yet clear whether the carboxylation occurs while the butyrate is attached to the ACP of dmxL2, but this unusual fungal metabolite could then be esterified to O-5 by the O-acetyltransferase dmxR13. Finally, dimerization performed by dmxR5 gives the observed dimers cryptosporioptides A, B and C as the final products of the pathway. This is Anthrone oxygenase dmxR16 from Cryptosporiopsis sp. (strain 8999).